Consider the following 140-residue polypeptide: Large-conductance mechanosensitive channel (140 aa).

The next 2 helical transmembrane spans lie at 21–41 (VGVI…GDVI) and 82–102 (GSFI…FMMI).

The protein belongs to the MscL family. Homopentamer.

It is found in the cell inner membrane. Its function is as follows. Channel that opens in response to stretch forces in the membrane lipid bilayer. May participate in the regulation of osmotic pressure changes within the cell. This is Large-conductance mechanosensitive channel from Leptothrix cholodnii (strain ATCC 51168 / LMG 8142 / SP-6) (Leptothrix discophora (strain SP-6)).